We begin with the raw amino-acid sequence, 144 residues long: Ig heavy chain V region MOPC 141 (144 aa).

Residues 1–19 form the signal peptide; it reads MAVLALLFCLATFPSCILS. The Ig-like domain maps to 20-130; the sequence is QVQLKESGPG…YYGRSDKYFT (111 aa).

This Mus musculus (Mouse) protein is Ig heavy chain V region MOPC 141.